The primary structure comprises 428 residues: GTPase HflX (428 aa).

The Hflx-type G domain occupies 214 to 374 (PVVAIVGYTN…AIERELFKET (161 aa)). GTP contacts are provided by residues 220–227 (GYTNAGKS), 245–249 (FATLD), 267–270 (DTVG), 333–336 (NKID), and 352–354 (SAK). 2 residues coordinate Mg(2+): S227 and T247.

It belongs to the TRAFAC class OBG-HflX-like GTPase superfamily. HflX GTPase family. Monomer. Associates with the 50S ribosomal subunit. It depends on Mg(2+) as a cofactor.

Its subcellular location is the cytoplasm. Its function is as follows. GTPase that associates with the 50S ribosomal subunit and may have a role during protein synthesis or ribosome biogenesis. This chain is GTPase HflX, found in Caldanaerobacter subterraneus subsp. tengcongensis (strain DSM 15242 / JCM 11007 / NBRC 100824 / MB4) (Thermoanaerobacter tengcongensis).